A 622-amino-acid polypeptide reads, in one-letter code: Probable E3 ubiquitin-protein ligase DTX2 (622 aa).

2 WWE domains span residues 8–97 (SLVQ…AVRR) and 98–174 (HLFP…SVRR). Asymmetric dimethylarginine is present on residues arginine 213, arginine 215, and arginine 233. Lysine 249 bears the N6-acetyllysine mark. 2 disordered regions span residues 249–324 (KPSL…VPMQ) and 355–393 (APQP…EPEP). Arginine 256 is subject to Omega-N-methylarginine. Residues 274–285 (LGSQPLYRSSLS) show a composition bias toward polar residues. A compositionally biased stretch (low complexity) spans 299-322 (SGAVSASLPSGPSSSPGSVPATVP). Serine 360 is subject to Phosphoserine. The segment covering 372 to 381 (GSVKRLRKMS) has biased composition (basic residues). The segment at 412-473 (CIICMEKLST…DGSLQCPSCK (62 aa)) adopts an RING-type zinc-finger fold.

It belongs to the Deltex family. In terms of assembly, homodimer. May form a heterodimer with other members of the Deltex family. Interacts with NOTCH1.

Its subcellular location is the cytoplasm. It localises to the nucleus. The catalysed reaction is S-ubiquitinyl-[E2 ubiquitin-conjugating enzyme]-L-cysteine + [acceptor protein]-L-lysine = [E2 ubiquitin-conjugating enzyme]-L-cysteine + N(6)-ubiquitinyl-[acceptor protein]-L-lysine.. It participates in protein modification; protein ubiquitination. Its function is as follows. Regulator of Notch signaling, a signaling pathway involved in cell-cell communications that regulates a broad spectrum of cell-fate determinations. Probably acts both as a positive and negative regulator of Notch, depending on the developmental and cell context. Mediates the antineural activity of Notch, possibly by inhibiting the transcriptional activation mediated by MATCH1. Functions as a ubiquitin ligase protein in vitro, suggesting that it may regulate the Notch pathway via some ubiquitin ligase activity. The sequence is that of Probable E3 ubiquitin-protein ligase DTX2 (DTX2) from Homo sapiens (Human).